The chain runs to 946 residues: Serine/threonine-protein kinase PLK4 (946 aa).

The region spanning 12-265 (FKVLNLLGKG…LSSVLDHAFM (254 aa)) is the Protein kinase domain. ATP-binding positions include 18–26 (LGKGSFACV) and K41. Catalysis depends on D136, which acts as the Proton acceptor. The segment at 330–395 (HPAERSNGGS…TYGKPSSFSE (66 aa)) is disordered. Positions 378–394 (RSGTSQSQTYGKPSSFS) are enriched in polar residues. Positions 566–679 (TLRSIISPLN…AKFIQLVRSK (114 aa)) constitute a Cryptic POLO box 1 (CPB1) domain. A Cryptic POLO box 2 (CPB2) domain is found at 680–792 (MPKVTYYTRY…GRRPAITESP (113 aa)). Positions 789 to 828 (TESPRTQLTVDSARERKDEQSSANRVLHSSATSPPQIPNI) are disordered. A compositionally biased stretch (polar residues) spans 809–828 (SSANRVLHSSATSPPQIPNI). Positions 864-942 (QVLKSVFVEN…LSSILMLFAS (79 aa)) constitute a POLO box domain.

This sequence belongs to the protein kinase superfamily. Ser/Thr protein kinase family. CDC5/Polo subfamily. Homodimer. Post-translationally, ubiquitinated; leading to its degradation by the proteasome.

Its subcellular location is the cytoplasm. The protein localises to the cytoskeleton. The protein resides in the microtubule organizing center. It is found in the centrosome. It localises to the centriole. The enzyme catalyses L-seryl-[protein] + ATP = O-phospho-L-seryl-[protein] + ADP + H(+). It carries out the reaction L-threonyl-[protein] + ATP = O-phospho-L-threonyl-[protein] + ADP + H(+). Functionally, serine/threonine-protein kinase that plays a central role in centriole duplication. Able to trigger procentriole formation on the surface of the parental centriole cylinder, leading to the recruitment of centriole biogenesis proteins such as sass6, cpap, ccp110, cep135 and gamma-tubulin. When overexpressed, it is able to induce centrosome amplification through the simultaneous generation of multiple procentrioles adjoining each parental centriole during S phase. Its central role in centriole replication suggests a possible role in tumorigenesis, centrosome aberrations being frequently observed in tumors. Also involved in deuterosome-mediated centriole amplification in multiciliated that can generate more than 100 centrioles. The polypeptide is Serine/threonine-protein kinase PLK4 (Xenopus tropicalis (Western clawed frog)).